Here is a 289-residue protein sequence, read N- to C-terminus: Formamidopyrimidine-DNA glycosylase (289 aa).

The active-site Schiff-base intermediate with DNA is Pro-2. Glu-3 acts as the Proton donor in catalysis. Residue Lys-61 is the Proton donor; for beta-elimination activity of the active site. Residues His-97, Arg-119, and Lys-168 each contribute to the DNA site. An FPG-type zinc finger spans residues 254–288 (NAYGRAGKPCPRCGEPIVRVQWTNRSSHFCPQCQS). Arg-278 functions as the Proton donor; for delta-elimination activity in the catalytic mechanism.

The protein belongs to the FPG family. Monomer. Zn(2+) is required as a cofactor.

The catalysed reaction is Hydrolysis of DNA containing ring-opened 7-methylguanine residues, releasing 2,6-diamino-4-hydroxy-5-(N-methyl)formamidopyrimidine.. The enzyme catalyses 2'-deoxyribonucleotide-(2'-deoxyribose 5'-phosphate)-2'-deoxyribonucleotide-DNA = a 3'-end 2'-deoxyribonucleotide-(2,3-dehydro-2,3-deoxyribose 5'-phosphate)-DNA + a 5'-end 5'-phospho-2'-deoxyribonucleoside-DNA + H(+). In terms of biological role, involved in base excision repair of DNA damaged by oxidation or by mutagenic agents. Acts as a DNA glycosylase that recognizes and removes damaged bases. Has a preference for oxidized purines, such as 7,8-dihydro-8-oxoguanine (8-oxoG). Has AP (apurinic/apyrimidinic) lyase activity and introduces nicks in the DNA strand. Cleaves the DNA backbone by beta-delta elimination to generate a single-strand break at the site of the removed base with both 3'- and 5'-phosphates. The sequence is that of Formamidopyrimidine-DNA glycosylase from Corynebacterium urealyticum (strain ATCC 43042 / DSM 7109).